The sequence spans 98 residues: NADH-ubiquinone oxidoreductase chain 4L (98 aa).

Helical transmembrane passes span 1–21, 29–49, and 61–81; these read MSLV…GLLM, SLLC…LMIL, and IILL…LVMV.

This sequence belongs to the complex I subunit 4L family. As to quaternary structure, core subunit of respiratory chain NADH dehydrogenase (Complex I) which is composed of 45 different subunits.

Its subcellular location is the mitochondrion inner membrane. It carries out the reaction a ubiquinone + NADH + 5 H(+)(in) = a ubiquinol + NAD(+) + 4 H(+)(out). Functionally, core subunit of the mitochondrial membrane respiratory chain NADH dehydrogenase (Complex I) which catalyzes electron transfer from NADH through the respiratory chain, using ubiquinone as an electron acceptor. Part of the enzyme membrane arm which is embedded in the lipid bilayer and involved in proton translocation. The sequence is that of NADH-ubiquinone oxidoreductase chain 4L (MT-ND4L) from Ovis aries (Sheep).